A 488-amino-acid chain; its full sequence is Alpha,alpha-trehalose-phosphate synthase [UDP-forming] 56 kDa subunit (488 aa).

Residues Tyr102 and Asp156 each coordinate D-glucose 6-phosphate. Residues Arg293 and Lys298 each coordinate UDP. Positions 293 and 298 each coordinate UDP-alpha-D-glucose. Residue Arg331 coordinates D-glucose 6-phosphate. Residues Ile370 and 396-400 (LVSYE) contribute to the UDP site. Residues Ile370 and 392-400 (DGMNLVSYE) each bind UDP-alpha-D-glucose.

Belongs to the glycosyltransferase 20 family. In terms of assembly, trehalose synthase/phosphatase complex contains three or four polypeptides of 56 kDa (TPS1), 102 kDa (TPS2), 115 kDa (TPS3) and 123 kDa (TSL1).

It carries out the reaction D-glucose 6-phosphate + UDP-alpha-D-glucose = alpha,alpha-trehalose 6-phosphate + UDP + H(+). It participates in carbohydrate biosynthesis. Its function is as follows. Synthase catalytic subunit of the trehalose synthase complex that catalyzes the production of trehalose from glucose-6-phosphate and UDP-alpha-D-glucose in a two step process. Can function independently of the complex. The chain is Alpha,alpha-trehalose-phosphate synthase [UDP-forming] 56 kDa subunit from Kluyveromyces lactis (strain ATCC 8585 / CBS 2359 / DSM 70799 / NBRC 1267 / NRRL Y-1140 / WM37) (Yeast).